Here is a 49-residue protein sequence, read N- to C-terminus: Photosystem I reaction center subunit IX (49 aa).

The chain crosses the membrane as a helical span at residues 14-34; the sequence is FISTAPVAATIWLTITAGILI.

Belongs to the PsaJ family.

It localises to the cellular thylakoid membrane. Its function is as follows. May help in the organization of the PsaE and PsaF subunits. This is Photosystem I reaction center subunit IX from Nostoc punctiforme (strain ATCC 29133 / PCC 73102).